The following is a 420-amino-acid chain: Tyrosine--tRNA ligase (420 aa).

An L-tyrosine-binding site is contributed by Tyr33. The short motif at 38-47 (PTADSLHIGH) is the 'HIGH' region element. Residues Tyr168 and Gln172 each coordinate L-tyrosine. Residues 231–235 (KFGKT) carry the 'KMSKS' region motif. Residue Lys234 participates in ATP binding. One can recognise an S4 RNA-binding domain in the interval 353–419 (MLLVDALIKV…GKKNYYLVKL (67 aa)).

This sequence belongs to the class-I aminoacyl-tRNA synthetase family. TyrS type 1 subfamily. As to quaternary structure, homodimer.

The protein localises to the cytoplasm. It carries out the reaction tRNA(Tyr) + L-tyrosine + ATP = L-tyrosyl-tRNA(Tyr) + AMP + diphosphate + H(+). Its function is as follows. Catalyzes the attachment of tyrosine to tRNA(Tyr) in a two-step reaction: tyrosine is first activated by ATP to form Tyr-AMP and then transferred to the acceptor end of tRNA(Tyr). The sequence is that of Tyrosine--tRNA ligase from Desulfitobacterium hafniense (strain Y51).